The following is a 122-amino-acid chain: Large ribosomal subunit protein bL12 (122 aa).

Belongs to the bacterial ribosomal protein bL12 family. In terms of assembly, homodimer. Part of the ribosomal stalk of the 50S ribosomal subunit. Forms a multimeric L10(L12)X complex, where L10 forms an elongated spine to which 2 to 4 L12 dimers bind in a sequential fashion. Binds GTP-bound translation factors.

Its function is as follows. Forms part of the ribosomal stalk which helps the ribosome interact with GTP-bound translation factors. Is thus essential for accurate translation. The protein is Large ribosomal subunit protein bL12 of Cellvibrio japonicus (strain Ueda107) (Pseudomonas fluorescens subsp. cellulosa).